Consider the following 375-residue polypeptide: 23S rRNA (uracil(747)-C(5))-methyltransferase RlmC (375 aa).

[4Fe-4S] cluster is bound by residues Cys3, Cys11, Cys14, and Cys87. S-adenosyl-L-methionine contacts are provided by Gln212, Phe241, Glu262, and Asn307. Residue Cys334 is the Nucleophile of the active site.

It belongs to the class I-like SAM-binding methyltransferase superfamily. RNA M5U methyltransferase family. RlmC subfamily.

The enzyme catalyses uridine(747) in 23S rRNA + S-adenosyl-L-methionine = 5-methyluridine(747) in 23S rRNA + S-adenosyl-L-homocysteine + H(+). Functionally, catalyzes the formation of 5-methyl-uridine at position 747 (m5U747) in 23S rRNA. The sequence is that of 23S rRNA (uracil(747)-C(5))-methyltransferase RlmC from Salmonella dublin (strain CT_02021853).